A 389-amino-acid chain; its full sequence is Na(+)/H(+) antiporter NhaA 1 (389 aa).

The next 12 membrane-spanning stretches (helical) occupy residues 12–32, 62–82, 97–117, 128–148, 157–177, 184–204, 220–240, 260–280, 282–302, 305–325, 331–351, and 365–385; these read VLNE…ALLV, FLLW…GLEL, IVLP…LFVL, GWAI…MMCG, IFLL…IAIF, IVAF…NILG, ISVL…AFFI, FWLA…VNLS, IDIG…LFVG, AGVF…LPQG, LYGV…IDGL, and LAIL…LKFF.

It belongs to the NhaA Na(+)/H(+) (TC 2.A.33) antiporter family.

Its subcellular location is the cell inner membrane. The catalysed reaction is Na(+)(in) + 2 H(+)(out) = Na(+)(out) + 2 H(+)(in). Functionally, na(+)/H(+) antiporter that extrudes sodium in exchange for external protons. This Campylobacter jejuni subsp. jejuni serotype O:23/36 (strain 81-176) protein is Na(+)/H(+) antiporter NhaA 1.